The following is a 514-amino-acid chain: Cobyric acid synthase (514 aa).

In terms of domain architecture, GATase cobBQ-type spans 263–457; that stretch reads ALDVAVIRLP…LHGIFDNDPL (195 aa). The active-site Nucleophile is Cys344. His449 is an active-site residue.

This sequence belongs to the CobB/CobQ family. CobQ subfamily.

It functions in the pathway cofactor biosynthesis; adenosylcobalamin biosynthesis. Catalyzes amidations at positions B, D, E, and G on adenosylcobyrinic A,C-diamide. NH(2) groups are provided by glutamine, and one molecule of ATP is hydrogenolyzed for each amidation. In Desulfitobacterium hafniense (strain DSM 10664 / DCB-2), this protein is Cobyric acid synthase.